Reading from the N-terminus, the 511-residue chain is Glucans biosynthesis protein G (511 aa).

Positions M1–A22 are cleaved as a signal peptide.

This sequence belongs to the OpgD/OpgG family.

It is found in the periplasm. It functions in the pathway glycan metabolism; osmoregulated periplasmic glucan (OPG) biosynthesis. Its function is as follows. Involved in the biosynthesis of osmoregulated periplasmic glucans (OPGs). The protein is Glucans biosynthesis protein G (mdoG) of Shigella flexneri.